A 255-amino-acid polypeptide reads, in one-letter code: Ornithine decarboxylase antizyme (255 aa).

This sequence belongs to the ODC antizyme family. As to quaternary structure, interacts with ODC and thereby sterically blocks ODC homodimerization.

Its function is as follows. Ornithine decarboxylase (ODC) antizyme protein that negatively regulates ODC activity and intracellular polyamine biosynthesis in response to increased intracellular polyamine levels. Binds to ODC monomers, inhibiting the assembly of the functional ODC homodimer, and targets the monomers for ubiquitin-independent proteolytic destruction by the 26S proteasome. The polypeptide is Ornithine decarboxylase antizyme (OAZ1) (Candida glabrata (strain ATCC 2001 / BCRC 20586 / JCM 3761 / NBRC 0622 / NRRL Y-65 / CBS 138) (Yeast)).